Reading from the N-terminus, the 406-residue chain is Inner kinetochore subunit OKP1 (406 aa).

2 disordered regions span residues 1-37 and 59-122; these read MAAD…SDSS and TQSK…TSGE. Residues 8-21 are compositionally biased toward polar residues; sequence FLQNIENDSINNGQ. Over residues 26–37 the composition is skewed to low complexity; sequence SPNRSSSESDSS. A compositionally biased stretch (acidic residues) spans 69-78; it reads NSDDAEEGEI. A Phosphoserine modification is found at serine 70. Composition is skewed to basic and acidic residues over residues 79 to 89 and 97 to 106; these read EERTNKEEGQY and LRFEVGKEST. Residues 107 to 122 are compositionally biased toward polar residues; sequence GKLQSHLSDGSATSGE. Residues 239–285 are a coiled coil; the sequence is SKRQFIQNRYSQELQNNERLEAILSREQNLLEETRKLCMNLKTNNKK. The segment at 317–340 is CTF19-MCM21 binding motif; the sequence is MHPDGPVTFRNDSHELNLMLNDPI. Residues 353–400 form an interaction with NKP1-NKP2 region; it reads VLSLLPSLKEYTKKSKELKETMGQMISDSHEEEIKEVFVPHHESHQDK. The segment at 379–406 is disordered; it reads SDSHEEEIKEVFVPHHESHQDKTEEDIH. Basic and acidic residues predominate over residues 380–406; that stretch reads DSHEEEIKEVFVPHHESHQDKTEEDIH.

It belongs to the CENP-Q/OKP1 family. As to quaternary structure, component of the heterotetrameric kinetochore subcomplex COMA, which consists of AME1, CTF19, MCM21 and OKP1. The COMA subcomplex is part of a larger constitutive centromere-associated network (CCAN) (also known as central kinetochore CTF19 complex in yeast), which is composed of at least AME1, CHL4, CNN1, CTF3, CTF19, IML3, MCM16, MCM21, MCM22, MHF1, MHF2, MIF2, NKP1, NKP2, OKP1 and WIP1. COMA binds the centromeric nucleosome-binding protein MIF2, and to the outer kinetochore MIND subcomplex. OKP1 interacts directly with AME1, with an NKP1-NKP2 dimer, and with CTF19-MCM21.

The protein localises to the nucleus. It is found in the chromosome. It localises to the centromere. The protein resides in the kinetochore. Component of the kinetochore, a multiprotein complex that assembles on centromeric DNA and attaches chromosomes to spindle microtubules, mediating chromosome segregation and sister chromatid segregation during meiosis and mitosis. Component of the inner kinetochore COMA complex, which connects centromere-associated proteins and the outer kinetochore. COMA interacts with other inner kinetochore proteins to form the inner kinetochore constitutive centromere-associated network (CCAN), which serves as a structural platform for outer kinetochore assembly. The protein is Inner kinetochore subunit OKP1 of Saccharomyces cerevisiae (strain ATCC 204508 / S288c) (Baker's yeast).